A 280-amino-acid polypeptide reads, in one-letter code: Vitamin B12-binding protein (280 aa).

A signal peptide spans 1-27 (MMPLGLFPLPRAAAVLLISLLTLPAQA). The region spanning 30-277 (RVISLSPSTT…QMASIPTPVA (248 aa)) is the Fe/B12 periplasmic-binding domain. Tyr-57 serves as a coordination point for cyanocob(III)alamin. An intrachain disulfide couples Cys-190 to Cys-266.

Belongs to the BtuF family. As to quaternary structure, the complex is composed of two ATP-binding proteins (BtuD), two transmembrane proteins (BtuC) and a solute-binding protein (BtuF).

It is found in the periplasm. Its function is as follows. Part of the ABC transporter complex BtuCDF involved in vitamin B12 import. Binds vitamin B12 and delivers it to the periplasmic surface of BtuC. This Yersinia pseudotuberculosis serotype O:3 (strain YPIII) protein is Vitamin B12-binding protein.